Reading from the N-terminus, the 653-residue chain is DNA mismatch repair protein MutL (653 aa).

Positions 368–413 are disordered; that stretch reads EVSQVAEPEGKTDITNKKETETKEKAEKKENKQEEKEEKTSAPEYV. A compositionally biased stretch (basic and acidic residues) spans 375 to 408; it reads PEGKTDITNKKETETKEKAEKKENKQEEKEEKTS.

The protein belongs to the DNA mismatch repair MutL/HexB family.

Its function is as follows. This protein is involved in the repair of mismatches in DNA. It is required for dam-dependent methyl-directed DNA mismatch repair. May act as a 'molecular matchmaker', a protein that promotes the formation of a stable complex between two or more DNA-binding proteins in an ATP-dependent manner without itself being part of a final effector complex. The chain is DNA mismatch repair protein MutL from Lactobacillus delbrueckii subsp. bulgaricus (strain ATCC 11842 / DSM 20081 / BCRC 10696 / JCM 1002 / NBRC 13953 / NCIMB 11778 / NCTC 12712 / WDCM 00102 / Lb 14).